The primary structure comprises 130 residues: Sirohydrochlorin cobaltochelatase (130 aa).

The active-site Proton acceptor is the H12. A Co(2+)-binding site is contributed by H12. A Ni(2+)-binding site is contributed by H12. Substrate contacts are provided by residues E48 and 73–78 (LASGVH). H78 contributes to the Co(2+) binding site. H78 contacts Ni(2+).

It belongs to the CbiX family. CbiXS subfamily. As to quaternary structure, homotetramer; dimer of dimers.

It catalyses the reaction Co-sirohydrochlorin + 2 H(+) = sirohydrochlorin + Co(2+). The catalysed reaction is Ni-sirohydrochlorin + 2 H(+) = sirohydrochlorin + Ni(2+). It participates in cofactor biosynthesis; adenosylcobalamin biosynthesis; cob(II)yrinate a,c-diamide from sirohydrochlorin (anaerobic route): step 1/10. Its function is as follows. Catalyzes the insertion of Co(2+) into sirohydrochlorin as part of the anaerobic pathway to cobalamin biosynthesis. Involved in the biosynthesis of the unique nickel-containing tetrapyrrole coenzyme F430, the prosthetic group of methyl-coenzyme M reductase (MCR), which plays a key role in methanogenesis and anaerobic methane oxidation. Catalyzes the insertion of Ni(2+) into sirohydrochlorin to yield Ni-sirohydrochlorin. The polypeptide is Sirohydrochlorin cobaltochelatase (Methanosarcina barkeri (strain Fusaro / DSM 804)).